We begin with the raw amino-acid sequence, 81 residues long: Costars family protein ABRACL (81 aa).

Belongs to the costars family.

The sequence is that of Costars family protein ABRACL (abracl) from Xenopus laevis (African clawed frog).